We begin with the raw amino-acid sequence, 613 residues long: Lysophospholipase 1 (613 aa).

The signal sequence occupies residues 1–21; it reads MLFRGLSLWMLFLASCLSALA. In terms of domain architecture, PLA2c spans 55–593; the sequence is DCPSDNIVES…YNYCWSGLYD (539 aa). N-linked (GlcNAc...) asparagine glycosylation is found at Asn142, Asn173, Asn220, Asn244, Asn281, Asn319, Asn348, Asn365, Asn494, Asn499, Asn523, Asn551, and Asn572.

The protein belongs to the lysophospholipase family.

Its subcellular location is the secreted. It carries out the reaction a 1-acyl-sn-glycero-3-phosphocholine + H2O = sn-glycerol 3-phosphocholine + a fatty acid + H(+). Functionally, catalyzes the release of fatty acids from lysophospholipids. Required for survival under high osmolarity, for normal osmotic stress-induced gene expression, and for nutrient-mediated repression of sexual differentiation. The chain is Lysophospholipase 1 (plb1) from Schizosaccharomyces pombe (strain 972 / ATCC 24843) (Fission yeast).